The primary structure comprises 144 residues: Large ribosomal subunit protein uL11 (144 aa).

It belongs to the universal ribosomal protein uL11 family. In terms of assembly, part of the ribosomal stalk of the 50S ribosomal subunit. Interacts with L10 and the large rRNA to form the base of the stalk. L10 forms an elongated spine to which L12 dimers bind in a sequential fashion forming a multimeric L10(L12)X complex. Post-translationally, one or more lysine residues are methylated.

Functionally, forms part of the ribosomal stalk which helps the ribosome interact with GTP-bound translation factors. The chain is Large ribosomal subunit protein uL11 from Marinomonas sp. (strain MWYL1).